The primary structure comprises 278 residues: tRNA(Phe) (4-demethylwyosine(37)-C(7)) aminocarboxypropyltransferase (278 aa).

Residues serine 109, arginine 116, glutamate 155, and 183-184 each bind S-adenosyl-L-methionine; that span reads DN.

The protein belongs to the class I-like SAM-binding methyltransferase superfamily. TRM5/TYW2 family.

Its subcellular location is the cytoplasm. It catalyses the reaction 4-demethylwyosine(37) in tRNA(Phe) + S-adenosyl-L-methionine = 4-demethyl-7-[(3S)-3-amino-3-carboxypropyl]wyosine(37) in tRNA(Phe) + S-methyl-5'-thioadenosine + H(+). Functionally, S-adenosyl-L-methionine-dependent transferase that acts as a component of the wyosine derivatives biosynthesis pathway. Catalyzes the transfer of the alpha-amino-alpha-carboxypropyl (acp) group from S-adenosyl-L-methionine to 4-demethylwyosine (imG-14), forming 7-aminocarboxypropyl-demethylwyosine (wybutosine-86) at position 37 of tRNA(Phe). This chain is tRNA(Phe) (4-demethylwyosine(37)-C(7)) aminocarboxypropyltransferase, found in Pyrococcus horikoshii (strain ATCC 700860 / DSM 12428 / JCM 9974 / NBRC 100139 / OT-3).